The primary structure comprises 89 residues: Porphobilinogen deaminase (89 aa).

It belongs to the HMBS family. In terms of assembly, monomer. Dipyrromethane serves as cofactor.

It carries out the reaction 4 porphobilinogen + H2O = hydroxymethylbilane + 4 NH4(+). It participates in porphyrin-containing compound metabolism; protoporphyrin-IX biosynthesis; coproporphyrinogen-III from 5-aminolevulinate: step 2/4. Tetrapolymerization of the monopyrrole PBG into the hydroxymethylbilane pre-uroporphyrinogen in several discrete steps. The sequence is that of Porphobilinogen deaminase (hemC) from Dickeya chrysanthemi (Pectobacterium chrysanthemi).